The following is a 150-amino-acid chain: Transcriptional repressor NrdR (150 aa).

The disordered stretch occupies residues 1–22 (MKCPYCSAPDSRVVNSRPSDDG). The segment at 3–34 (CPYCSAPDSRVVNSRPSDDGASIRRRRECLRC) is a zinc-finger region. Residues 49–136 (LMVLKRGGQR…VYRDFDSLER (88 aa)) form the ATP-cone domain.

It belongs to the NrdR family. It depends on Zn(2+) as a cofactor.

Negatively regulates transcription of bacterial ribonucleotide reductase nrd genes and operons by binding to NrdR-boxes. In Deinococcus geothermalis (strain DSM 11300 / CIP 105573 / AG-3a), this protein is Transcriptional repressor NrdR.